The primary structure comprises 142 residues: Large ribosomal subunit protein uL13 (142 aa).

It belongs to the universal ribosomal protein uL13 family. In terms of assembly, part of the 50S ribosomal subunit.

In terms of biological role, this protein is one of the early assembly proteins of the 50S ribosomal subunit, although it is not seen to bind rRNA by itself. It is important during the early stages of 50S assembly. This chain is Large ribosomal subunit protein uL13, found in Hydrogenovibrio crunogenus (strain DSM 25203 / XCL-2) (Thiomicrospira crunogena).